The chain runs to 282 residues: Trihydroxynaphthalene reductase (282 aa).

Residues Ile41, Asn114, and Arg147 each contribute to the NADP(+) site. Active-site proton donor residues include Ser164 and Tyr178. NADP(+)-binding residues include Tyr178, Lys182, Ile211, and Thr213. Lys182 functions as the Lowers pKa of active site Tyr in the catalytic mechanism.

Belongs to the short-chain dehydrogenases/reductases (SDR) family. In terms of assembly, homotetramer.

The protein operates within pigment biosynthesis; melanin biosynthesis. Catalyzes the NADPH-dependent reduction of 1,3,8-trihydroxynaphthalene (T3HN) into (-)-vermelone. Essential for appressorial penetration of colletotrichum lagenarium. The polypeptide is Trihydroxynaphthalene reductase (THR1) (Colletotrichum orbiculare (strain 104-T / ATCC 96160 / CBS 514.97 / LARS 414 / MAFF 240422) (Cucumber anthracnose fungus)).